A 337-amino-acid chain; its full sequence is MSIARRTTLSKFLIEQQRETNNLPADLRLLIEVVARACKAISYNVSKGALGDALGTAGSENVQGEVQKKLDILSNEILLDANEWGGNLAAMASEEMETFFPIPANYPRGEYLLVFDPLDGSSNIDVNVSIGTIFSVLRCPDGKQATEESFLQPGTEQVAAGYAVYGPQTVFVLTTGNGVNCFTLDREVGSWVLTQSNMQIPADTREYAINASNARHWYDPVKRYVDELNAGKDGPRGDNFNMRWIASMVADVHRILNRGGIFMYPADKRTPDRPGKLRLMYEANPMSFIVEQAGGAATTGTQRIMEVQPTGLHQRVPVFLGSKNEVKRVTGYHDEAK.

Mg(2+) contacts are provided by glutamate 94, aspartate 116, leucine 118, and aspartate 119. Residues 119–122 (DGSS), asparagine 210, and lysine 276 each bind substrate. Residue glutamate 282 participates in Mg(2+) binding.

It belongs to the FBPase class 1 family. As to quaternary structure, homotetramer. Mg(2+) serves as cofactor.

It is found in the cytoplasm. The catalysed reaction is beta-D-fructose 1,6-bisphosphate + H2O = beta-D-fructose 6-phosphate + phosphate. The protein operates within carbohydrate biosynthesis; gluconeogenesis. The sequence is that of Fructose-1,6-bisphosphatase class 1 from Burkholderia cenocepacia (strain HI2424).